The sequence spans 133 residues: Transmembrane protein 60 (133 aa).

The next 4 membrane-spanning stretches (helical) occupy residues 5 to 25 (LAQR…MLVL), 35 to 55 (WFLI…LLIV), 78 to 98 (AWYL…CAKL), and 110 to 130 (FIPL…NVFF).

Its subcellular location is the membrane. The polypeptide is Transmembrane protein 60 (TMEM60) (Homo sapiens (Human)).